The chain runs to 51 residues: Large ribosomal subunit protein bL33 (51 aa).

Belongs to the bacterial ribosomal protein bL33 family.

The polypeptide is Large ribosomal subunit protein bL33 (Alkalilimnicola ehrlichii (strain ATCC BAA-1101 / DSM 17681 / MLHE-1)).